Reading from the N-terminus, the 806-residue chain is Leucine--tRNA ligase (806 aa).

The 'HIGH' region motif lies at 40 to 51 (PYPSGKGLHVGH). Positions 580–584 (KMSKS) match the 'KMSKS' region motif. Position 583 (lysine 583) interacts with ATP.

It belongs to the class-I aminoacyl-tRNA synthetase family.

The protein localises to the cytoplasm. It carries out the reaction tRNA(Leu) + L-leucine + ATP = L-leucyl-tRNA(Leu) + AMP + diphosphate. The protein is Leucine--tRNA ligase of Ureaplasma urealyticum serovar 10 (strain ATCC 33699 / Western).